The following is a 460-amino-acid chain: Biphenyl 2,3-dioxygenase subunit alpha (460 aa).

Residues 56–165 (WLLMGHETQI…VETYKGLIFA (110 aa)) enclose the Rieske domain. Residues cysteine 98, histidine 100, cysteine 118, and histidine 121 each contribute to the [2Fe-2S] cluster site. Substrate is bound at residue 217–230 (QFCSDMYHAGTTSH). Fe cation-binding residues include histidine 224, histidine 230, and aspartate 378.

This sequence belongs to the bacterial ring-hydroxylating dioxygenase alpha subunit family. In terms of assembly, heterohexamer consisting of three BphA1 subunits and three BphA2 subunits. The multicomponent biphenyl dioxygenase system is composed of a ferredoxin reductase (BphA4), a ferredoxin (BphA3), and a terminal oxygenase (BphA1A2). It depends on [2Fe-2S] cluster as a cofactor. Fe cation is required as a cofactor.

The enzyme catalyses biphenyl + NADH + O2 + H(+) = (2R,3S)-3-phenylcyclohexa-3,5-diene-1,2-diol + NAD(+). Its pathway is xenobiotic degradation; biphenyl degradation; 2-hydroxy-2,4-pentadienoate and benzoate from biphenyl: step 1/4. In terms of biological role, part of the oxygenase component of the biphenyl dioxygenase system that catalyzes the stereospecific dihydroxylation of the aromatic ring of biphenyl, yielding a dihydrodiol compound. Is essential for biphenyl degradation and growth of Rhodococcus sp. strain RHA1 on biphenyl as the sole source of carbon and energy. Can also use naphtalene and 4-chlorobiphenyl (4-CB) as substrates, as well as some polychlorinated biphenyls (PCB) such as 2,2'-dichlorobiphenyl, 2,3-dichlorobiphenyl and 2,5,2'-trichlorobiphenyl. Exhibits weak activity toward dibenzofuran and dibenzo-p-dioxin. Electrons are transferred from NADH to the [2Fe-2S] cluster in BphA1 via FAD of BphA4 and [2Fe-2S] cluster of BphA3. This chain is Biphenyl 2,3-dioxygenase subunit alpha, found in Rhodococcus jostii (strain RHA1).